We begin with the raw amino-acid sequence, 627 residues long: UvrABC system protein C (627 aa).

One can recognise a GIY-YIG domain in the interval 22–100; it reads NNPGVYRMFN…IKRLRPRFNV (79 aa). The UVR domain maps to 210–245; that stretch reads QSVKDHLAAAMQAASADLDFEHAAVYRDRLAALSHV.

The protein belongs to the UvrC family. Interacts with UvrB in an incision complex.

It localises to the cytoplasm. Functionally, the UvrABC repair system catalyzes the recognition and processing of DNA lesions. UvrC both incises the 5' and 3' sides of the lesion. The N-terminal half is responsible for the 3' incision and the C-terminal half is responsible for the 5' incision. This is UvrABC system protein C from Brucella abortus biovar 1 (strain 9-941).